A 333-amino-acid polypeptide reads, in one-letter code: Ketol-acid reductoisomerase (NADP(+)) (333 aa).

Positions 1–171 (MSNDTQPTIA…GGARANIIKT (171 aa)) constitute a KARI N-terminal Rossmann domain. Residues 14–17 (YGSQ), R37, T42, and 72–75 (DMVQ) contribute to the NADP(+) site. Residue H97 is part of the active site. An NADP(+)-binding site is contributed by G123. A KARI C-terminal knotted domain is found at 172–317 (TFKEETETDL…KKLRAKMVWL (146 aa)). D180, E184, E216, and E220 together coordinate Mg(2+). S241 serves as a coordination point for substrate.

This sequence belongs to the ketol-acid reductoisomerase family. It depends on Mg(2+) as a cofactor.

It catalyses the reaction (2R)-2,3-dihydroxy-3-methylbutanoate + NADP(+) = (2S)-2-acetolactate + NADPH + H(+). The enzyme catalyses (2R,3R)-2,3-dihydroxy-3-methylpentanoate + NADP(+) = (S)-2-ethyl-2-hydroxy-3-oxobutanoate + NADPH + H(+). Its pathway is amino-acid biosynthesis; L-isoleucine biosynthesis; L-isoleucine from 2-oxobutanoate: step 2/4. It participates in amino-acid biosynthesis; L-valine biosynthesis; L-valine from pyruvate: step 2/4. Functionally, involved in the biosynthesis of branched-chain amino acids (BCAA). Catalyzes an alkyl-migration followed by a ketol-acid reduction of (S)-2-acetolactate (S2AL) to yield (R)-2,3-dihydroxy-isovalerate. In the isomerase reaction, S2AL is rearranged via a Mg-dependent methyl migration to produce 3-hydroxy-3-methyl-2-ketobutyrate (HMKB). In the reductase reaction, this 2-ketoacid undergoes a metal-dependent reduction by NADPH to yield (R)-2,3-dihydroxy-isovalerate. This is Ketol-acid reductoisomerase (NADP(+)) from Xanthomonas campestris pv. campestris (strain 8004).